The primary structure comprises 632 residues: Mediator of RNA polymerase II transcription subunit 17 (632 aa).

2 disordered regions span residues 1–21 (MSDSFTVSLRPIREKRDRPDS) and 50–72 (EDKHKDHWEEDDEGDKESTDLET). Residues 11-21 (PIREKRDRPDS) are compositionally biased toward basic and acidic residues. Positions 58–72 (EEDDEGDKESTDLET) are enriched in acidic residues.

It belongs to the Mediator complex subunit 17 family. In terms of assembly, component of the Mediator complex.

It localises to the nucleus. Functionally, component of the Mediator complex, a coactivator involved in the regulated transcription of nearly all RNA polymerase II-dependent genes. Mediator functions as a bridge to convey information from gene-specific regulatory proteins to the basal RNA polymerase II transcription machinery. Mediator is recruited to promoters by direct interactions with regulatory proteins and serves as a scaffold for the assembly of a functional preinitiation complex with RNA polymerase II and the general transcription factors. This is Mediator of RNA polymerase II transcription subunit 17 (srb4) from Emericella nidulans (strain FGSC A4 / ATCC 38163 / CBS 112.46 / NRRL 194 / M139) (Aspergillus nidulans).